Here is a 220-residue protein sequence, read N- to C-terminus: MPNKSPTRTLYALFGGTFDPIHYGHLKPVETLAQQVGLQHIILLPNHVPPHRPQPEANAQQRLKMVELAVAGNPLFSVDSRELLRDTPSFTIDTLESLRKERGAERPLAFIIGQDSLLSLHKWHRWQSLLDVCHLLVCARPGYAQTLETPELQQWLDAHRVFDPQALSLRPHGAIYLADTPLLDISATDIRHRRHNGESCDDLLPRAVQRYIELQGLYRG.

This sequence belongs to the NadD family.

The catalysed reaction is nicotinate beta-D-ribonucleotide + ATP + H(+) = deamido-NAD(+) + diphosphate. It participates in cofactor biosynthesis; NAD(+) biosynthesis; deamido-NAD(+) from nicotinate D-ribonucleotide: step 1/1. Catalyzes the reversible adenylation of nicotinate mononucleotide (NaMN) to nicotinic acid adenine dinucleotide (NaAD). The sequence is that of Probable nicotinate-nucleotide adenylyltransferase from Yersinia enterocolitica serotype O:8 / biotype 1B (strain NCTC 13174 / 8081).